A 152-amino-acid chain; its full sequence is Transcriptional regulator MraZ (152 aa).

2 consecutive SpoVT-AbrB domains span residues 5-52 (ASAI…PIHE) and 81-124 (AHEC…DEAA).

This sequence belongs to the MraZ family. As to quaternary structure, forms oligomers.

The protein resides in the cytoplasm. Its subcellular location is the nucleoid. This chain is Transcriptional regulator MraZ, found in Shewanella pealeana (strain ATCC 700345 / ANG-SQ1).